The following is a 403-amino-acid chain: Histidine--tRNA ligase (403 aa).

This sequence belongs to the class-II aminoacyl-tRNA synthetase family. As to quaternary structure, homodimer.

Its subcellular location is the cytoplasm. The enzyme catalyses tRNA(His) + L-histidine + ATP = L-histidyl-tRNA(His) + AMP + diphosphate + H(+). The polypeptide is Histidine--tRNA ligase (hisS) (Aquifex aeolicus (strain VF5)).